Consider the following 407-residue polypeptide: MAYQEPNKDGFYGKFGGRFVPETLMTAVLELEKAYRESQADPSFQEELNQLLRQYVGRETPLYYAKNLTQHIGGAKIYLKREDLNHTGAHKINNALGQVWLAKRMGKKKIIAETGAGQHGVATATAAALFNMECTIYMGEEDVKRQALNVFRMELLGAKVEAVTDGSRVLKDAVNAALRSWVANIDDTHYILGSALGPHPFPEIVRDFQSVIGREAKQQYRDLTGRDLPDALVACVGGGSNAIGLFHPFVEDESVAMYGTEAAGLGVDTEHHAATLTKGRPGVLHGSLMDVLQDAHGQILEAFSISAGLDYPGIGPEHSHYHDIKRASYVPVTDEEALEGFQLLSRVEGIIPALESSHAIAFAVKLAKELGPEKSMIVCLSGRGDKDVVQVKDRLEADAAKKGEAHA.

An N6-(pyridoxal phosphate)lysine modification is found at K91.

Belongs to the TrpB family. Tetramer of two alpha and two beta chains. Pyridoxal 5'-phosphate is required as a cofactor.

It catalyses the reaction (1S,2R)-1-C-(indol-3-yl)glycerol 3-phosphate + L-serine = D-glyceraldehyde 3-phosphate + L-tryptophan + H2O. It functions in the pathway amino-acid biosynthesis; L-tryptophan biosynthesis; L-tryptophan from chorismate: step 5/5. The beta subunit is responsible for the synthesis of L-tryptophan from indole and L-serine. This is Tryptophan synthase beta chain from Streptococcus pneumoniae (strain 70585).